The primary structure comprises 212 residues: Large ribosomal subunit protein uL1 (212 aa).

It belongs to the universal ribosomal protein uL1 family. In terms of assembly, part of the 50S ribosomal subunit.

Functionally, binds directly to 23S rRNA. Probably involved in E site tRNA release. Its function is as follows. Protein L1 is also a translational repressor protein, it controls the translation of its operon by binding to its mRNA. The polypeptide is Large ribosomal subunit protein uL1 (Natronomonas pharaonis (strain ATCC 35678 / DSM 2160 / CIP 103997 / JCM 8858 / NBRC 14720 / NCIMB 2260 / Gabara) (Halobacterium pharaonis)).